The following is a 1094-amino-acid chain: Centrosomal protein of 128 kDa (1094 aa).

The disordered stretch occupies residues 1-29; the sequence is MAESSSESDHFRCRDRLSPWAARSTHRGT. Over residues 7-17 the composition is skewed to basic and acidic residues; that stretch reads ESDHFRCRDRL. Ser31 carries the post-translational modification Phosphoserine. The segment at 115 to 140 is disordered; it reads DGGTGSELHHFPPTSPLKDYGDPQGI. 2 coiled-coil regions span residues 190–827 and 879–959; these read SRSD…QESI and EELK…IALE. Residues Ser249, Ser291, and Ser331 each carry the phosphoserine modification. Positions 319 to 345 are disordered; that stretch reads AEGDRKGLQHQVSQISKQQSNYQDEQG. A compositionally biased stretch (polar residues) spans 328–342; it reads HQVSQISKQQSNYQD. A compositionally biased stretch (basic and acidic residues) spans 987-999; it reads DSCSSSERTDGRY. The interval 987 to 1018 is disordered; the sequence is DSCSSSERTDGRYSKYRVRRNSLQHHQDDTKY. The segment covering 1000–1009 has biased composition (basic residues); that stretch reads SKYRVRRNSL. Ser1061 is modified (phosphoserine). The segment at 1067-1094 is disordered; sequence VAPDSASNKEDATMNGTSSQPKKEEYGS.

It localises to the cytoplasm. The protein resides in the cytoskeleton. It is found in the microtubule organizing center. The protein localises to the centrosome. Its subcellular location is the centriole. It localises to the spindle pole. In Homo sapiens (Human), this protein is Centrosomal protein of 128 kDa (CEP128).